The following is a 236-amino-acid chain: Purine nucleoside phosphorylase DeoD-type (236 aa).

His-5 lines the a purine D-ribonucleoside pocket. Residues Gly-21, Arg-25, Arg-44, and 88-91 (RVGT) each bind phosphate. A purine D-ribonucleoside-binding positions include 180-182 (EME) and 204-205 (SD). Asp-205 functions as the Proton donor in the catalytic mechanism.

Belongs to the PNP/UDP phosphorylase family. In terms of assembly, homohexamer; trimer of homodimers.

The enzyme catalyses a purine D-ribonucleoside + phosphate = a purine nucleobase + alpha-D-ribose 1-phosphate. It catalyses the reaction a purine 2'-deoxy-D-ribonucleoside + phosphate = a purine nucleobase + 2-deoxy-alpha-D-ribose 1-phosphate. Functionally, catalyzes the reversible phosphorolytic breakdown of the N-glycosidic bond in the beta-(deoxy)ribonucleoside molecules, with the formation of the corresponding free purine bases and pentose-1-phosphate. The chain is Purine nucleoside phosphorylase DeoD-type from Shewanella amazonensis (strain ATCC BAA-1098 / SB2B).